A 230-amino-acid chain; its full sequence is Dephospho-CoA kinase (230 aa).

The segment at 1–21 (MSKYAAAPSPYSHQPQTPEHK) is disordered. Positions 26-225 (VVGLTGGIGS…QDYLKLAQQL (200 aa)) constitute a DPCK domain. ATP is bound at residue 34 to 39 (GSGKSA).

Belongs to the CoaE family.

Its subcellular location is the cytoplasm. It carries out the reaction 3'-dephospho-CoA + ATP = ADP + CoA + H(+). Its pathway is cofactor biosynthesis; coenzyme A biosynthesis; CoA from (R)-pantothenate: step 5/5. Catalyzes the phosphorylation of the 3'-hydroxyl group of dephosphocoenzyme A to form coenzyme A. The chain is Dephospho-CoA kinase from Psychrobacter cryohalolentis (strain ATCC BAA-1226 / DSM 17306 / VKM B-2378 / K5).